Here is a 491-residue protein sequence, read N- to C-terminus: Probable cytosol aminopeptidase (491 aa).

The Mn(2+) site is built by Lys-264 and Asp-269. The active site involves Lys-276. Asp-287, Asp-346, and Glu-348 together coordinate Mn(2+). Arg-350 is a catalytic residue.

It belongs to the peptidase M17 family. Requires Mn(2+) as cofactor.

It is found in the cytoplasm. The enzyme catalyses Release of an N-terminal amino acid, Xaa-|-Yaa-, in which Xaa is preferably Leu, but may be other amino acids including Pro although not Arg or Lys, and Yaa may be Pro. Amino acid amides and methyl esters are also readily hydrolyzed, but rates on arylamides are exceedingly low.. The catalysed reaction is Release of an N-terminal amino acid, preferentially leucine, but not glutamic or aspartic acids.. In terms of biological role, presumably involved in the processing and regular turnover of intracellular proteins. Catalyzes the removal of unsubstituted N-terminal amino acids from various peptides. This Xylella fastidiosa (strain 9a5c) protein is Probable cytosol aminopeptidase.